Here is a 397-residue protein sequence, read N- to C-terminus: Acetate kinase 1 (397 aa).

Position 8 (Asn8) interacts with Mg(2+). Position 15 (Lys15) interacts with ATP. Position 89 (Arg89) interacts with substrate. The active-site Proton donor/acceptor is Asp146. ATP is bound by residues 206 to 210 (HLGNG), 281 to 283 (DLR), and 329 to 333 (GIGEN). Mg(2+) is bound at residue Glu382.

The protein belongs to the acetokinase family. As to quaternary structure, homodimer. Requires Mg(2+) as cofactor. The cofactor is Mn(2+).

It localises to the cytoplasm. The catalysed reaction is acetate + ATP = acetyl phosphate + ADP. It participates in metabolic intermediate biosynthesis; acetyl-CoA biosynthesis; acetyl-CoA from acetate: step 1/2. In terms of biological role, catalyzes the formation of acetyl phosphate from acetate and ATP. Can also catalyze the reverse reaction. This chain is Acetate kinase 1, found in Listeria innocua serovar 6a (strain ATCC BAA-680 / CLIP 11262).